The following is a 700-amino-acid chain: Elongation factor G 1 (700 aa).

The tr-type G domain maps to 8–290; the sequence is ERYRNIGISA…AVIEYLPSPI (283 aa). Residues 17 to 24, 88 to 92, and 142 to 145 each bind GTP; these read AHIDAGKT, DTPGH, and NKMD.

Belongs to the TRAFAC class translation factor GTPase superfamily. Classic translation factor GTPase family. EF-G/EF-2 subfamily.

The protein resides in the cytoplasm. Functionally, catalyzes the GTP-dependent ribosomal translocation step during translation elongation. During this step, the ribosome changes from the pre-translocational (PRE) to the post-translocational (POST) state as the newly formed A-site-bound peptidyl-tRNA and P-site-bound deacylated tRNA move to the P and E sites, respectively. Catalyzes the coordinated movement of the two tRNA molecules, the mRNA and conformational changes in the ribosome. The protein is Elongation factor G 1 of Bordetella avium (strain 197N).